Reading from the N-terminus, the 62-residue chain is Large ribosomal subunit protein bL28 (62 aa).

The protein belongs to the bacterial ribosomal protein bL28 family.

The protein is Large ribosomal subunit protein bL28 of Acetivibrio thermocellus (strain ATCC 27405 / DSM 1237 / JCM 9322 / NBRC 103400 / NCIMB 10682 / NRRL B-4536 / VPI 7372) (Clostridium thermocellum).